Consider the following 437-residue polypeptide: Sorting nexin-30 (437 aa).

Residues 1 to 45 form a disordered region; the sequence is MAGGPPKALPSTGPQSLRDMPHPLAGSSSEEAVGGDSTPSPDLLM. Threonine 38 bears the Phosphothreonine mark. A Phosphoserine modification is found at serine 40. A PX domain is found at 89-210; it reads RDLFVTVDDP…VFLTAKDLNA (122 aa). A 1,2-diacyl-sn-glycero-3-phospho-(1D-myo-inositol-3-phosphate) contacts are provided by arginine 132, glutamine 134, lysine 162, and arginine 176. Residues 234–437 form the BAR domain; that stretch reads KLRSRPLEFA…PLLQEKQETK (204 aa).

Belongs to the sorting nexin family. Heterodimer; heterodimerizes with SNX4.

The protein localises to the early endosome membrane. Functionally, involved in the regulation of endocytosis and in several stages of intracellular trafficking. Together with SNX4, involved in autophagosome assembly. In Mus musculus (Mouse), this protein is Sorting nexin-30.